Here is a 202-residue protein sequence, read N- to C-terminus: Large ribosomal subunit protein uL13 (202 aa).

This sequence belongs to the universal ribosomal protein uL13 family. Component of the large ribosomal subunit (LSU). Mature N.crassa ribosomes consist of a small (40S) and a large (60S) subunit. The 40S small subunit contains 1 molecule of ribosomal RNA (18S rRNA) and at least 32 different proteins. The large 60S subunit contains 3 rRNA molecules (26S, 5.8S and 5S rRNA) and at least 42 different proteins.

It localises to the cytoplasm. Functionally, component of the ribosome, a large ribonucleoprotein complex responsible for the synthesis of proteins in the cell. The small ribosomal subunit (SSU) binds messenger RNAs (mRNAs) and translates the encoded message by selecting cognate aminoacyl-transfer RNA (tRNA) molecules. The large subunit (LSU) contains the ribosomal catalytic site termed the peptidyl transferase center (PTC), which catalyzes the formation of peptide bonds, thereby polymerizing the amino acids delivered by tRNAs into a polypeptide chain. The nascent polypeptides leave the ribosome through a tunnel in the LSU and interact with protein factors that function in enzymatic processing, targeting, and the membrane insertion of nascent chains at the exit of the ribosomal tunnel. The protein is Large ribosomal subunit protein uL13 (crp-46) of Neurospora crassa (strain ATCC 24698 / 74-OR23-1A / CBS 708.71 / DSM 1257 / FGSC 987).